A 252-amino-acid chain; its full sequence is MLAKRIIPCLDVKAGRVVKGVNFIGLQDIGDPVEIAALYNQAGADEIVFLDITATYEERKTIVDVVEKTASKVFIPLTVGGGISTVKDIYTLLRAGADKVSLNSAAVKNPLFIQEGAEHFGSQCIVVAIDARKVEEDKWHVYVNGGRTDTGIDAVHWAKQVAELGAGEILLTSMDADGTKDGYNLRLTDIISANVSIPVIASGGCGSANHIVEVFAHTSVNAALAASIFHYGECTVQEVKQKLQYAGIEVRI.

Catalysis depends on residues aspartate 11 and aspartate 130.

This sequence belongs to the HisA/HisF family. In terms of assembly, heterodimer of HisH and HisF.

It localises to the cytoplasm. The enzyme catalyses 5-[(5-phospho-1-deoxy-D-ribulos-1-ylimino)methylamino]-1-(5-phospho-beta-D-ribosyl)imidazole-4-carboxamide + L-glutamine = D-erythro-1-(imidazol-4-yl)glycerol 3-phosphate + 5-amino-1-(5-phospho-beta-D-ribosyl)imidazole-4-carboxamide + L-glutamate + H(+). The protein operates within amino-acid biosynthesis; L-histidine biosynthesis; L-histidine from 5-phospho-alpha-D-ribose 1-diphosphate: step 5/9. Functionally, IGPS catalyzes the conversion of PRFAR and glutamine to IGP, AICAR and glutamate. The HisF subunit catalyzes the cyclization activity that produces IGP and AICAR from PRFAR using the ammonia provided by the HisH subunit. This Bacillus cytotoxicus (strain DSM 22905 / CIP 110041 / 391-98 / NVH 391-98) protein is Imidazole glycerol phosphate synthase subunit HisF.